An 886-amino-acid chain; its full sequence is Valine--tRNA ligase (886 aa).

A 'HIGH' region motif is present at residues 53–63; that stretch reads PNVTGSLHMGH. The 'KMSKS' region signature appears at 540-544; that stretch reads KMSKS. K543 lines the ATP pocket. Residues 820 to 851 are a coiled coil; that stretch reads IDVAAERRRMEKDLAAAQKELASTAAKLANAD.

It belongs to the class-I aminoacyl-tRNA synthetase family. ValS type 1 subfamily. As to quaternary structure, monomer.

The protein resides in the cytoplasm. It catalyses the reaction tRNA(Val) + L-valine + ATP = L-valyl-tRNA(Val) + AMP + diphosphate. In terms of biological role, catalyzes the attachment of valine to tRNA(Val). As ValRS can inadvertently accommodate and process structurally similar amino acids such as threonine, to avoid such errors, it has a 'posttransfer' editing activity that hydrolyzes mischarged Thr-tRNA(Val) in a tRNA-dependent manner. This Mycobacterium leprae (strain TN) protein is Valine--tRNA ligase.